Reading from the N-terminus, the 373-residue chain is MLDRDVGPTPMYPPTYLEPGIGRHTPYGNQTDYRIFELNKRLQNWTEECDNLWWDAFTTEFFEDDAMLTITFCLEDGPKRYTIGRTLIPRYFRSIFEGGATELYYVLKHPKESFHNNFVSLDCDQCTMVTQHGKPMFTQVCVEGRLYLEFMFDDMMRIKTWHFSIRQHRELIPRSILAMHAQDPQMLDQLSKNITRCGLSNSTLNYLRLCVILEPMQELMSRHKTYSLSPRDCLKTCLFQKWQRMVAPPAEPARQAPNKRRKRKMSGGSTMSSGGGNTNNSNSKKKSPASTFALSSQDVMVVGEPTLMGGEFGDEDERLITRLENTQFDAANGIDDEDSFNNSPALGANSPWNSKPPSSQESKSENPTSQASQ.

2 disordered regions span residues 248–297 (PPAE…LSSQ) and 329–373 (DAAN…QASQ). Low complexity predominate over residues 266-282 (SGGSTMSSGGGNTNNSN). Residues 288–297 (PASTFALSSQ) are compositionally biased toward polar residues. The region spanning 298–337 (DVMVVGEPTLMGGEFGDEDERLITRLENTQFDAANGIDDE) is the LIM interaction domain (LID) domain.

The protein belongs to the LDB family. In terms of assembly, forms homodimers and heterodimers. Interacts with and activates lhx1/lim1. The stoichiometry of lhx1/lim1 and ldb1 is important for their function and an excess of ldb1 can inhibit lhx1/lim1 function. When bound to lhx1/lim1, escapes degradation by rnf12. Interacts with the N-terminal region of rnf12. Undergoes rnf12-mediated ubiquitin-proteasome-dependent degradation.

The protein localises to the nucleus. In terms of biological role, binds to the LIM domain of a wide variety of LIM domain-containing transcription factors. Acts as a coactivator together with otx2 to stimulate lhx1/lim1-mediated activation of the gsc promoter in the Spemann organizer. Acts synergistically with lhx1/lim1 and ssbp in axis formation. The protein is LIM domain-binding protein 1 of Xenopus tropicalis (Western clawed frog).